A 357-amino-acid chain; its full sequence is Geranylgeranyl pyrophosphate synthase spyE (357 aa).

A disordered region spans residues 36-60 (EAQSQAVPGTRTETEPTGSSPSDLQ). Residues 50–59 (EPTGSSPSDL) are compositionally biased toward polar residues. Isopentenyl diphosphate contacts are provided by K84, R87, and H116. Mg(2+)-binding residues include D123 and D127. Dimethylallyl diphosphate is bound at residue R132. Position 133 (R133) interacts with isopentenyl diphosphate. K210, T211, and Q244 together coordinate dimethylallyl diphosphate. D247 is a binding site for Mg(2+). N251, K261, and K271 together coordinate dimethylallyl diphosphate.

Belongs to the FPP/GGPP synthase family. Mg(2+) is required as a cofactor.

The enzyme catalyses isopentenyl diphosphate + dimethylallyl diphosphate = (2E)-geranyl diphosphate + diphosphate. The catalysed reaction is isopentenyl diphosphate + (2E)-geranyl diphosphate = (2E,6E)-farnesyl diphosphate + diphosphate. It catalyses the reaction isopentenyl diphosphate + (2E,6E)-farnesyl diphosphate = (2E,6E,10E)-geranylgeranyl diphosphate + diphosphate. Its pathway is secondary metabolite biosynthesis; terpenoid biosynthesis. Functionally, geranylgeranyl pyrophosphate synthase; part of the gene cluster that mediates the biosynthesis of meroterpenoids called sartorypyrones. Within the pathway, spyE provides the spyF cosubstrate geranylgeranyl pyrophosphate (GGPP) for the prenylation of triacetic acid lactone (TAL). The biosynthesis of sartorypyrones begins with the production of triacetic acid lactone (TAL) by the NR-PKS spyA using one molecule of acetyl-CoA and two molecules of malonyl-CoA. The prenyltransferase spyF then conjugates geranylgeranyl pyrophosphate (GGPP) to TAL to form geranylgeranyl-triacetate lactone, for which the pathway-specific geranylgeranyl pyrophosphate synthase (GGPS) spyE is required to provide GGPP. Subsequently, geranylgeranyl-triacetate lactone is epoxidized at the terminal olein by the FAD-dependent monooxygenase spyC, followed by cyclization of the terpenoid component catalyzed by the terpene cyclase spyD to produce both the bicyclic sartorypyrone F and the monocyclic sartorypyrone D. Finally, the last step of the biosynthesis involves the acetylation of the meroterpenoids sartorypyrones D and F by the acetyltransferase SpyB to produce sartorypyrones A and G, respectively. The chain is Geranylgeranyl pyrophosphate synthase spyE from Aspergillus fumigatus (strain ATCC MYA-4609 / CBS 101355 / FGSC A1100 / Af293) (Neosartorya fumigata).